We begin with the raw amino-acid sequence, 377 residues long: MSVARLTTYNFRNLSSVAIDLHPKLNFFIGNNGSGKSSLLEALFFLGHGKSFRTSKVEHLACYETDNFVVSIKDVNDLQLGLSKNLQTGVTLIKINGERHARLSELAKNIAVQIVTPESFKLFFGGPKERRRFIELGMFHVKHDSSKQWREFNRVLKQRNACIRHNLDKATFDYWTGLFCQLSEQVAEVRSQYITNLISELPYWLEILLPNIADKVTVQYLQGWPQKKNLMDSLNDSHEREQAFGYSIYGAHKFDVKFLIAKQALESQLSRGQQKLFLLALTFAQAKLIARVNRVKPILLIDDIGAELDINSRESLSQALSILDCQVIITAIEEGVLQPFIDDVSVADKESSKKTKYHMFHVKHGGILPVNNSVKIE.

30–37 (GNNGSGKS) provides a ligand contact to ATP.

The protein belongs to the RecF family.

Its subcellular location is the cytoplasm. Its function is as follows. The RecF protein is involved in DNA metabolism; it is required for DNA replication and normal SOS inducibility. RecF binds preferentially to single-stranded, linear DNA. It also seems to bind ATP. The protein is DNA replication and repair protein RecF of Colwellia psychrerythraea (strain 34H / ATCC BAA-681) (Vibrio psychroerythus).